Here is a 209-residue protein sequence, read N- to C-terminus: Large ribosomal subunit protein uL3 (209 aa).

Position 150 is an N5-methylglutamine (Gln-150).

It belongs to the universal ribosomal protein uL3 family. As to quaternary structure, part of the 50S ribosomal subunit. Forms a cluster with proteins L14 and L19. Post-translationally, methylated by PrmB.

Functionally, one of the primary rRNA binding proteins, it binds directly near the 3'-end of the 23S rRNA, where it nucleates assembly of the 50S subunit. This is Large ribosomal subunit protein uL3 from Vibrio parahaemolyticus serotype O3:K6 (strain RIMD 2210633).